Consider the following 79-residue polypeptide: Sec-independent protein translocase protein TatA (79 aa).

Residues 1–21 (MGSLSIWHWIVVIAVVLLLFG) traverse the membrane as a helical segment. Basic and acidic residues predominate over residues 43-60 (LQDDEKTAEKPDPVKSID). The tract at residues 43–79 (LQDDEKTAEKPDPVKSIDHNAPTAAAPTRTDVGSKAV) is disordered.

It belongs to the TatA/E family. As to quaternary structure, the Tat system comprises two distinct complexes: a TatABC complex, containing multiple copies of TatA, TatB and TatC subunits, and a separate TatA complex, containing only TatA subunits. Substrates initially bind to the TatABC complex, which probably triggers association of the separate TatA complex to form the active translocon.

The protein resides in the cell inner membrane. Functionally, part of the twin-arginine translocation (Tat) system that transports large folded proteins containing a characteristic twin-arginine motif in their signal peptide across membranes. TatA could form the protein-conducting channel of the Tat system. This chain is Sec-independent protein translocase protein TatA, found in Rhodopseudomonas palustris (strain BisB5).